The sequence spans 231 residues: DNA repair protein RecO (231 aa).

This sequence belongs to the RecO family.

Involved in DNA repair and RecF pathway recombination. The polypeptide is DNA repair protein RecO (Coxiella burnetii (strain CbuK_Q154) (Coxiella burnetii (strain Q154))).